A 386-amino-acid polypeptide reads, in one-letter code: ADP,ATP carrier protein, mitochondrial (386 aa).

The N-terminal 76 residues, 1 to 76 (ADNQHPTVYQ…ANASPVFVQA (76 aa)), are a transit peptide targeting the mitochondrion. 3 Solcar repeats span residues 83–176 (AAFA…FKRL), 188–281 (KWFA…LKPV), and 289–375 (DSFF…LQVI). A run of 5 helical transmembrane segments spans residues 85–112 (FATDFLMGGVSAAVSKTAAAPIERVKLL), 153–177 (TANVIRYFPTQALNFAFKDYFKRLF), 186–206 (YWKWFAGNLASGGGAGASSLL), 257–278 (FNISCVGIIVYRGLYFGMYDSL), and 292–312 (FASFALGWLITNGAGLASYPI). Residues arginine 158 and lysine 170 each contribute to the ADP site. Arginine 316 is a binding site for ADP. Residues 316–321 (RRRMMM) are important for transport activity. Residues 316–321 (RRRMMM) carry the Nucleotide carrier signature motif motif. The chain crosses the membrane as a helical span at residues 352 to 372 (AGANVLRAVAGAGVLAGYDKL).

Belongs to the mitochondrial carrier (TC 2.A.29) family. As to quaternary structure, monomer.

Its subcellular location is the mitochondrion inner membrane. The enzyme catalyses ADP(in) + ATP(out) = ADP(out) + ATP(in). With respect to regulation, the matrix-open state (m-state) is inhibited by the membrane-permeable bongkrekic acid (BKA). The cytoplasmic-open state (c-state) is inhibited by the membrane-impermeable toxic inhibitor carboxyatractyloside (CATR). Functionally, ADP:ATP antiporter that mediates import of ADP into the mitochondrial matrix for ATP synthesis, and export of ATP out to fuel the cell. Cycles between the cytoplasmic-open state (c-state) and the matrix-open state (m-state): operates by the alternating access mechanism with a single substrate-binding site intermittently exposed to either the cytosolic (c-state) or matrix (m-state) side of the inner mitochondrial membrane. This chain is ADP,ATP carrier protein, mitochondrial (ANT1), found in Solanum tuberosum (Potato).